Here is a 186-residue protein sequence, read N- to C-terminus: Pyridoxal 5'-phosphate synthase subunit PdxT (186 aa).

Gly-46–Ser-48 is a binding site for L-glutamine. Cys-75 serves as the catalytic Nucleophile. Residues Arg-101 and Ile-129–Arg-130 each bind L-glutamine. Catalysis depends on charge relay system residues His-165 and Glu-167.

This sequence belongs to the glutaminase PdxT/SNO family. In the presence of PdxS, forms a dodecamer of heterodimers. Only shows activity in the heterodimer.

The catalysed reaction is aldehydo-D-ribose 5-phosphate + D-glyceraldehyde 3-phosphate + L-glutamine = pyridoxal 5'-phosphate + L-glutamate + phosphate + 3 H2O + H(+). It carries out the reaction L-glutamine + H2O = L-glutamate + NH4(+). The protein operates within cofactor biosynthesis; pyridoxal 5'-phosphate biosynthesis. Its function is as follows. Catalyzes the hydrolysis of glutamine to glutamate and ammonia as part of the biosynthesis of pyridoxal 5'-phosphate. The resulting ammonia molecule is channeled to the active site of PdxS. This Staphylococcus aureus (strain Mu3 / ATCC 700698) protein is Pyridoxal 5'-phosphate synthase subunit PdxT.